Consider the following 88-residue polypeptide: Small ribosomal subunit protein eS21 (88 aa).

It belongs to the eukaryotic ribosomal protein eS21 family. Component of the 40S small ribosomal subunit.

It localises to the cytoplasm. The protein localises to the cytosol. Its subcellular location is the rough endoplasmic reticulum. The polypeptide is Small ribosomal subunit protein eS21 (rps-21) (Caenorhabditis elegans).